A 151-amino-acid polypeptide reads, in one-letter code: 3-dehydroquinate dehydratase (151 aa).

The active-site Proton acceptor is tyrosine 26. Residues asparagine 75, histidine 81, and aspartate 88 each contribute to the substrate site. Histidine 101 acts as the Proton donor in catalysis. Residues leucine 102 to serine 103 and arginine 112 contribute to the substrate site.

Belongs to the type-II 3-dehydroquinase family. In terms of assembly, homododecamer.

It carries out the reaction 3-dehydroquinate = 3-dehydroshikimate + H2O. It participates in metabolic intermediate biosynthesis; chorismate biosynthesis; chorismate from D-erythrose 4-phosphate and phosphoenolpyruvate: step 3/7. Functionally, catalyzes a trans-dehydration via an enolate intermediate. The protein is 3-dehydroquinate dehydratase of Shewanella halifaxensis (strain HAW-EB4).